The chain runs to 91 residues: UPF0147 protein APE_2336a (91 aa).

It belongs to the UPF0147 family.

In Aeropyrum pernix (strain ATCC 700893 / DSM 11879 / JCM 9820 / NBRC 100138 / K1), this protein is UPF0147 protein APE_2336a.